The chain runs to 212 residues: uncharacterized protein (212 aa).

Residues 186-206 (VITLISFMLFSILFFLIFLIV) form a helical membrane-spanning segment.

The protein resides in the membrane. This is an uncharacterized protein from Mycoplasma genitalium (strain ATCC 33530 / DSM 19775 / NCTC 10195 / G37) (Mycoplasmoides genitalium).